Here is a 593-residue protein sequence, read N- to C-terminus: Aspartate--tRNA(Asp/Asn) ligase (593 aa).

Glu-172 serves as a coordination point for L-aspartate. Residues 196–199 are aspartate; it reads QLFK. Position 218 (Arg-218) interacts with L-aspartate. ATP contacts are provided by residues 218-220 and Gln-227; that span reads RDE. An L-aspartate-binding site is contributed by His-450. Residue Glu-484 participates in ATP binding. Residue Arg-491 coordinates L-aspartate. 536 to 539 is an ATP binding site; sequence GLDR.

It belongs to the class-II aminoacyl-tRNA synthetase family. Type 1 subfamily. Homodimer.

It is found in the cytoplasm. The catalysed reaction is tRNA(Asx) + L-aspartate + ATP = L-aspartyl-tRNA(Asx) + AMP + diphosphate. Aspartyl-tRNA synthetase with relaxed tRNA specificity since it is able to aspartylate not only its cognate tRNA(Asp) but also tRNA(Asn). Reaction proceeds in two steps: L-aspartate is first activated by ATP to form Asp-AMP and then transferred to the acceptor end of tRNA(Asp/Asn). This chain is Aspartate--tRNA(Asp/Asn) ligase, found in Nitrosomonas europaea (strain ATCC 19718 / CIP 103999 / KCTC 2705 / NBRC 14298).